Reading from the N-terminus, the 395-residue chain is Transcription termination/antitermination protein NusA (395 aa).

An S1 motif domain is found at 137–201; sequence NSVLMGQVIL…TKKGLLLELS (65 aa). 2 consecutive KH domains span residues 243-291 and 331-378; these read SHNA…TLAL and KVRL…NESE.

It belongs to the NusA family. In terms of assembly, monomer. Binds directly to the core enzyme of the DNA-dependent RNA polymerase and to nascent RNA.

It localises to the cytoplasm. Its function is as follows. Participates in both transcription termination and antitermination. The chain is Transcription termination/antitermination protein NusA from Helicobacter pylori (strain ATCC 700392 / 26695) (Campylobacter pylori).